The chain runs to 290 residues: Protease HtpX homolog (290 aa).

2 helical membrane-spanning segments follow: residues 4 to 24 (IFLFIATNIAVIAVMSVVLSL) and 39 to 59 (PMLLVFSLVVGFTGSIISLLI). His144 is a Zn(2+) binding site. The active site involves Glu145. A Zn(2+)-binding site is contributed by His148. Transmembrane regions (helical) follow at residues 159–179 (LVQGVVNTFVVFLSRVVGYFV) and 197–217 (ITVIVSQIVFGIAASVIVAWF). Glu222 is a binding site for Zn(2+).

It belongs to the peptidase M48B family. It depends on Zn(2+) as a cofactor.

It is found in the cell inner membrane. This chain is Protease HtpX homolog, found in Janthinobacterium sp. (strain Marseille) (Minibacterium massiliensis).